A 381-amino-acid chain; its full sequence is MLPFSMTGLEKDHTRGVLILANAHRRSERSRTASCAGPAVLFGGLITANIVAWAWAFALFADRPVVMATALLAWVFGLRHAVDADHIAAIDNVVRSLMQTGGTPRSAGLYFALGHSSVVVVATMLLALGVVSLGGDGLLKEIGSFIGASVSALFLLVIAAINLAIFASLWRTFRKAREQGIRDAAGLDALLAHRGILVRLLGPMFRLVTKPWHMYPLGFLFGLGFDTATEIGLLSISASEAARGASLADVMVFPALFAAGMALVDTADSTLMVSAYRWAFVDPMRKLWYNLTITGASVAVALFIGGIEALGLIGNRLDLSGGVWTLIDALNESLANVGLAVIALFAIAWLLSIVLYRRLIAGSSGLADTEVLECADATEAV.

At M1–A39 the chain is on the cytoplasmic side. The helical transmembrane segment at V40–F60 threads the bilayer. The Periplasmic segment spans residues A61–R63. The chain crosses the membrane as a helical span at residues P64 to A84. Topologically, residues D85–Y110 are cytoplasmic. Residues F111–V131 form a helical membrane-spanning segment. Residues S132–S149 lie on the Periplasmic side of the membrane. The helical transmembrane segment at V150–W170 threads the bilayer. At R171–Y215 the chain is on the cytoplasmic side. The helical transmembrane segment at P216–I236 threads the bilayer. At S237–R243 the chain is on the periplasmic side. The chain crosses the membrane as a helical span at residues G244–V264. Over D265–T292 the chain is Cytoplasmic. A helical membrane pass occupies residues I293 to I313. Residues G314–S333 lie on the Periplasmic side of the membrane. Residues L334–V354 traverse the membrane as a helical segment. Residues L355–V381 lie on the Cytoplasmic side of the membrane.

It belongs to the NiCoT transporter (TC 2.A.52) family.

It localises to the cell inner membrane. Involved in nickel incorporation/metabolism into the hydrogenase apoprotein. The chain is Hydrogenase nickel incorporation protein HupN (hupN) from Bradyrhizobium diazoefficiens (strain JCM 10833 / BCRC 13528 / IAM 13628 / NBRC 14792 / USDA 110).